Reading from the N-terminus, the 172-residue chain is Shikimate kinase (172 aa).

ATP is bound at residue 14–19 (GAGKST). Ser-18 contacts Mg(2+). Substrate is bound by residues Asp-36, Arg-60, and Gly-82. Residue Arg-120 participates in ATP binding. Arg-139 provides a ligand contact to substrate. Residue Gln-156 participates in ATP binding.

The protein belongs to the shikimate kinase family. In terms of assembly, monomer. Mg(2+) serves as cofactor.

The protein localises to the cytoplasm. The enzyme catalyses shikimate + ATP = 3-phosphoshikimate + ADP + H(+). It functions in the pathway metabolic intermediate biosynthesis; chorismate biosynthesis; chorismate from D-erythrose 4-phosphate and phosphoenolpyruvate: step 5/7. Its function is as follows. Catalyzes the specific phosphorylation of the 3-hydroxyl group of shikimic acid using ATP as a cosubstrate. This is Shikimate kinase from Vibrio vulnificus (strain CMCP6).